The chain runs to 74 residues: uncharacterized protein (74 aa).

It is found in the mitochondrion. This is an uncharacterized protein from Marchantia polymorpha (Common liverwort).